The following is a 308-amino-acid chain: Ribosomal protein L11 methyltransferase (308 aa).

S-adenosyl-L-methionine is bound by residues Thr-157, Gly-178, Asp-200, and Asn-243.

It belongs to the methyltransferase superfamily. PrmA family.

Its subcellular location is the cytoplasm. It catalyses the reaction L-lysyl-[protein] + 3 S-adenosyl-L-methionine = N(6),N(6),N(6)-trimethyl-L-lysyl-[protein] + 3 S-adenosyl-L-homocysteine + 3 H(+). Functionally, methylates ribosomal protein L11. In Pelotomaculum thermopropionicum (strain DSM 13744 / JCM 10971 / SI), this protein is Ribosomal protein L11 methyltransferase.